Reading from the N-terminus, the 1045-residue chain is Elongation factor 3 (1045 aa).

HEAT repeat units follow at residues 5–42, 43–85, 86–123, 125–162, 166–203, 205–241, and 242–279; these read DQSL…GNII, EHDI…PSVE, PFVI…AINP, AIKA…AAKE, LRMP…TVDN, DIER…EVTP, and ATLS…LVED. 3 residues coordinate ADP: isoleucine 42, histidine 44, and serine 83. Residues threonine 392, histidine 396, and glutamate 397 each coordinate ADP. ABC transporter domains lie at 426-641 and 667-993; these read DEGE…YYEL and VKVS…KKED. Residues asparagine 703, glutamate 922, asparagine 925, and histidine 951 each contribute to the ADP site. Residues 974–1045 form a disordered region; sequence SGHNWVSGQG…AYVSSDDEDF (72 aa). The segment covering 1007–1031 has biased composition (basic residues); it reads GGKKKKKLSSAELRKKKKERMKKKK.

Belongs to the ABC transporter superfamily. ABCF family. EF3 subfamily. Monomer.

The protein resides in the cytoplasm. It is found in the cytosol. The enzyme catalyses ATP + H2O = ADP + phosphate + H(+). It participates in protein biosynthesis; polypeptide chain elongation. Functionally, ribosome-dependent ATPase that functions in cytoplasmic translation elongation. Required for the ATP-dependent release of deacylated tRNA from the ribosomal E-site during protein biosynthesis. Stimulates the eEF1A-dependent binding of aminoacyl-tRNA to the ribosomal A-site, which has reduced affinity for tRNA as long as the E-site is occupied. Assists translation termination by stimulating the release of nascent protein from the ribosome by release factors. The sequence is that of Elongation factor 3 (TEF3) from Candida glabrata (strain ATCC 2001 / BCRC 20586 / JCM 3761 / NBRC 0622 / NRRL Y-65 / CBS 138) (Yeast).